A 457-amino-acid chain; its full sequence is Putative adhesion G protein-coupled receptor E4P (457 aa).

A signal peptide spans Met1–Ser14. 6 cysteine pairs are disulfide-bonded: Cys15–Cys24, Cys18–Cys30, Cys32–Cys52, Cys58–Cys71, Cys65–Cys80, and Cys82–Cys103. An EGF-like 1 domain is found at Cys15 to Glu53. At Pro16–Thr191 the chain is on the extracellular side. Asn26 carries an N-linked (GlcNAc...) asparagine glycan. The 51-residue stretch at Asp54–Tyr104 folds into the EGF-like 2; calcium-binding domain. Residues Asn106 and Asn162 are each glycosylated (N-linked (GlcNAc...) asparagine). The 53-residue stretch at Asp134 to Glu186 folds into the GAIN-B domain. Cystine bridges form between Cys141–Cys168 and Cys156–Cys170. A GPS region spans residues Cys141 to Glu186. A helical membrane pass occupies residues Val192 to Phe212. Residues Leu213–Thr223 lie on the Cytoplasmic side of the membrane. A helical transmembrane segment spans residues Ser224 to Ile244. A glycan (N-linked (GlcNAc...) asparagine) is linked at Asn245. Residues Asn245–Glu250 are Extracellular-facing. The helical transmembrane segment at Val251–Met271 threads the bilayer. The Cytoplasmic segment spans residues Leu272–Arg299. A helical transmembrane segment spans residues Phe300–Gly320. Residues Pro321 to Gly336 are Extracellular-facing. A helical transmembrane segment spans residues Phe337–Phe357. The Cytoplasmic portion of the chain corresponds to Gln358–Thr384. The helical transmembrane segment at Phe385 to Val405 threads the bilayer. Topologically, residues Glu406–Gly413 are extracellular. Residues Ser414–Val434 form a helical membrane-spanning segment. At His435–Asn457 the chain is on the cytoplasmic side.

Belongs to the G-protein coupled receptor 2 family. Adhesion G-protein coupled receptor (ADGR) subfamily. As to quaternary structure, forms a heterodimer, consisting of a large extracellular region (alpha subunit) non-covalently linked to a seven-transmembrane moiety (beta subunit). In terms of processing, glycosylated. Proteolytically cleaved into 2 subunits, an extracellular alpha subunit and a seven-transmembrane subunit.

The protein localises to the cell membrane. It is found in the secreted. May mediate the cellular interaction between myeloid cells and B-cells. This chain is Putative adhesion G protein-coupled receptor E4P, found in Homo sapiens (Human).